A 335-amino-acid chain; its full sequence is Erlin-2 (335 aa).

The Cytoplasmic portion of the chain corresponds to 1-2 (MS). The chain crosses the membrane as a helical span at residues 3-23 (HAGAIAAIGVALIAAALFSAI). Topologically, residues 24-335 (HKIEEGHVGV…ALNEPAVGDE (312 aa)) are lumenal. An N-linked (GlcNAc...) asparagine glycan is attached at Asn-106. Over residues 310–321 (AGPSVQSATLLQ) the composition is skewed to polar residues. The interval 310–335 (AGPSVQSATLLQDDSPALNEPAVGDE) is disordered.

This sequence belongs to the band 7/mec-2 family.

Its subcellular location is the endoplasmic reticulum membrane. In terms of biological role, mediates the endoplasmic reticulum-associated degradation (ERAD) of inositol 1,4,5-trisphosphate receptors (IP3Rs). Promotes sterol-accelerated ERAD of HMGCR. Involved in regulation of cellular cholesterol homeostasis by regulation the SREBP signaling pathway. The polypeptide is Erlin-2 (erlin2) (Xenopus tropicalis (Western clawed frog)).